The sequence spans 351 residues: Cell cycle control protein 50B (351 aa).

Topologically, residues 1 to 33 (MTWSATARGAHQPDNTAFTQQRLPAWQPLLSAS) are cytoplasmic. The chain crosses the membrane as a helical span at residues 34–54 (IALPLFFCAGLAFIGLGLGLY). Topologically, residues 55–315 (YSSNGIKELE…SISWMGGKNP (261 aa)) are exoplasmic loop. Residues asparagine 75, asparagine 213, and asparagine 286 are each glycosylated (N-linked (GlcNAc...) asparagine). The helical transmembrane segment at 316 to 336 (FLGIAYLVVGSLCILTGFVML) threads the bilayer. At 337–351 (VVYIRYQDQDDDDEE) the chain is on the cytoplasmic side.

The protein belongs to the CDC50/LEM3 family. As to quaternary structure, component of a P4-ATPase flippase complex which consists of a catalytic alpha subunit and an accessory beta subunit. Interacts with alpha subunits ATP8A1, ATP8B1, ATP8B2 and ATP8B4.

The protein resides in the cell membrane. Accessory component of a P4-ATPase flippase complex which catalyzes the hydrolysis of ATP coupled to the transport of aminophospholipids from the outer to the inner leaflet of various membranes and ensures the maintenance of asymmetric distribution of phospholipids. Phospholipid translocation also seems to be implicated in vesicle formation and in uptake of lipid signaling molecules. The beta subunit may assist in binding of the phospholipid substrate. Can mediate the export of alpha subunits ATP8A1, ATP8B1, ATP8B2 and ATP8B4 from the ER to the plasma membrane. This chain is Cell cycle control protein 50B (TMEM30B), found in Homo sapiens (Human).